A 293-amino-acid chain; its full sequence is MESTSGERSENIHEDQGIPKVILPADFNKCSRTDLVVLISRMLVSLIAINENSATKKSDDQITLTRYHSKIPPNISIFNYFIRLTKFSSLEHCVLMTSLYYIDLLQTVYPDFTLNSLTAHRFLLTATTVATKGLCDSFSTNAHYAKVGGVRCHELNILENDFLKRVNYRIIPRDHNITLCSIEQKQKKFVIDKNALGSLDLDSYSYVNRPKSGYNVLDKYYRRIVQLVGSFNASPDKSRKVDYVLPPNIDIVSESGSQTTQLKGSSSPNSHSSQKRYSEAKDAHIYNKRSKPD.

Residues Ser234 and Ser267 each carry the phosphoserine; by PHO85 modification. The span at Glu254–Ser272 shows a compositional bias: polar residues. Residues Glu254–Asp293 are disordered. Residues Arg276–Asp293 show a composition bias toward basic and acidic residues.

This sequence belongs to the cyclin family. PHO80 subfamily. In terms of assembly, forms a cyclin-CDK complex with PHO85. PHO80-PHO85 forms a stable complex with its inhibitor PHO81 under both high- and low-phosphate conditions, but PHO81 only inhibits the kinase upon phosphate starvation. Interacts with transcription factor PHO4. In terms of processing, phosphorylation of Ser-267 by PHO85 is required to form an active cyclin-kinase complex and for function.

It localises to the cytoplasm. Its subcellular location is the nucleus. Inhibited by the CDK inhibitor (CKI) PHO81 in response to phosphate starvation. In terms of biological role, cyclin partner of the cyclin-dependent kinase (CDK) PHO85. Negatively regulates the expression of phosphate-starvation-responsive genes under phosphate-rich conditions. The PHO80-PHO85 cyclin-CDK holoenzyme phosphorylates and inactivates the transcription factor PHO4, by preventing its association with the transcription factor PHO2 and the nuclear import receptor PSE1, and by promoting association with the nuclear export receptor MSN5, excluding PHO4 from the nucleus. PHO80-PHO85 phosphorylates and inactivates protein kinase RIM15 by retaining it in the cytoplasm, antagonizing RIM15-induced entry into stationary phase. PHO80-PHO85 also phosphorylates and inactivates the calcineurin-responsive transcription factor CRZ1, linking PHO85 to calcium signaling. In Saccharomyces cerevisiae (strain ATCC 204508 / S288c) (Baker's yeast), this protein is PHO85 cyclin PHO80 (PHO80).